Consider the following 263-residue polypeptide: MSKIHPSAVVEDGAIIGDEVIIEAYSFVGANAKIGNNVVIKQGARILPNVKIGDDSKIFSYAIVGDIPQDISYKDEINSGVIIGKNATIREFVTINSGTAKGDGYTRIGDNAFIMAYSHIAHDCILGNNIILANNATLAGHVELGDYTVVGGLTPIHQFVKVGEGCMIAGASALSQDIVPFCLAEGNRASIRSLNLVGLRRRFDKEEIDILSKTFKILFKQGNLKDNALNLLESTSSENVKKMCNFILETKRGIPIYKEKNHG.

This sequence belongs to the transferase hexapeptide repeat family. LpxA subfamily. In terms of assembly, homotrimer.

The protein resides in the cytoplasm. It catalyses the reaction a (3R)-hydroxyacyl-[ACP] + UDP-N-acetyl-alpha-D-glucosamine = a UDP-3-O-[(3R)-3-hydroxyacyl]-N-acetyl-alpha-D-glucosamine + holo-[ACP]. It participates in glycolipid biosynthesis; lipid IV(A) biosynthesis; lipid IV(A) from (3R)-3-hydroxytetradecanoyl-[acyl-carrier-protein] and UDP-N-acetyl-alpha-D-glucosamine: step 1/6. Its function is as follows. Involved in the biosynthesis of lipid A, a phosphorylated glycolipid that anchors the lipopolysaccharide to the outer membrane of the cell. The chain is Acyl-[acyl-carrier-protein]--UDP-N-acetylglucosamine O-acyltransferase from Campylobacter lari (strain RM2100 / D67 / ATCC BAA-1060).